The following is a 61-amino-acid chain: MARKALIEKWNKTPKYSTRAYTRCRICGRPHAVLKKYGICRICFRELAYKGEIPGCKKASW.

Zn(2+)-binding residues include C24, C27, C40, and C43.

Belongs to the universal ribosomal protein uS14 family. Zinc-binding uS14 subfamily. In terms of assembly, part of the 30S ribosomal subunit. Contacts proteins S3 and S10. It depends on Zn(2+) as a cofactor.

Functionally, binds 16S rRNA, required for the assembly of 30S particles and may also be responsible for determining the conformation of the 16S rRNA at the A site. In Clostridium botulinum (strain 657 / Type Ba4), this protein is Small ribosomal subunit protein uS14.